The chain runs to 240 residues: Insulin-like growth factor-binding protein 6 (240 aa).

A signal peptide spans 1 to 27 (MTPHRLLPPLLLLLALLLAASPGGALA). The IGFBP N-terminal domain occupies 28–107 (RCPGCGQGVQ…LLGRGRCLPA (80 aa)). 5 disulfides stabilise this stretch: Cys29-Cys32, Cys40-Cys44, Cys57-Cys63, Cys71-Cys84, and Cys78-Cys104. The segment at 109-160 (APAVAEENPKESKPQAGTARPQDVNRRDQQRNPGTSTTPSQPNSAGVQDTEM) is disordered. The O-linked (HexNAc...) threonine glycan is linked to Thr126. Positions 139–155 (RNPGTSTTPSQPNSAGV) are enriched in polar residues. The O-linked (HexNAc...) serine glycan is linked to Ser144. 2 O-linked (HexNAc...) threonine glycosylation sites follow: Thr145 and Thr146. O-linked (HexNAc...) serine glycosylation is present at Ser152. One can recognise a Thyroglobulin type-1 domain in the interval 160 to 234 (MGPCRRHLDS…SPDGNGSSSC (75 aa)). Cystine bridges form between Cys163/Cys190, Cys201/Cys212, and Cys214/Cys234. The interval 217–240 (RMGKSLPGSPDGNGSSSCPTGSSG) is disordered. Residues 228–240 (GNGSSSCPTGSSG) show a composition bias toward polar residues.

In terms of assembly, interacts (via C-terminal domain) with PHB2. Post-translationally, O-linked glycans consist of hexose (probably Gal), N-acetylhexosamine (probably GalNAc) and sialic acid residues. O-glycosylated with core 1 or possibly core 8 glycans. O-glycosylated on one site only in the region AA 143-168 in cerebrospinal fluid.

It localises to the secreted. IGF-binding proteins prolong the half-life of the IGFs and have been shown to either inhibit or stimulate the growth promoting effects of the IGFs on cell culture. They alter the interaction of IGFs with their cell surface receptors. Activates the MAPK signaling pathway and induces cell migration. The chain is Insulin-like growth factor-binding protein 6 from Homo sapiens (Human).